A 155-amino-acid chain; its full sequence is Protein Smg homolog (155 aa).

The protein belongs to the Smg family.

The protein is Protein Smg homolog of Azoarcus sp. (strain BH72).